The chain runs to 147 residues: D-aminoacyl-tRNA deacylase (147 aa).

A Gly-cisPro motif, important for rejection of L-amino acids motif is present at residues 136-137 (GP).

This sequence belongs to the DTD family. As to quaternary structure, homodimer.

It is found in the cytoplasm. It carries out the reaction glycyl-tRNA(Ala) + H2O = tRNA(Ala) + glycine + H(+). The catalysed reaction is a D-aminoacyl-tRNA + H2O = a tRNA + a D-alpha-amino acid + H(+). An aminoacyl-tRNA editing enzyme that deacylates mischarged D-aminoacyl-tRNAs. Also deacylates mischarged glycyl-tRNA(Ala), protecting cells against glycine mischarging by AlaRS. Acts via tRNA-based rather than protein-based catalysis; rejects L-amino acids rather than detecting D-amino acids in the active site. By recycling D-aminoacyl-tRNA to D-amino acids and free tRNA molecules, this enzyme counteracts the toxicity associated with the formation of D-aminoacyl-tRNA entities in vivo and helps enforce protein L-homochirality. In Streptococcus dysgalactiae subsp. equisimilis (Streptococcus equisimilis), this protein is D-aminoacyl-tRNA deacylase.